The primary structure comprises 215 residues: uncharacterized protein (215 aa).

The S-adenosyl-L-methionine site is built by G53, E74, and D97.

Belongs to the methyltransferase superfamily. YrrT family.

Could be a S-adenosyl-L-methionine-dependent methyltransferase. This is an uncharacterized protein from Geobacillus thermodenitrificans (strain NG80-2).